We begin with the raw amino-acid sequence, 331 residues long: Ketol-acid reductoisomerase (NADP(+)) (331 aa).

The 181-residue stretch at 2 to 182 folds into the KARI N-terminal Rossmann domain; sequence AQLFYDSDAD…GGTRAGILET (181 aa). NADP(+)-binding positions include 25 to 28, serine 51, serine 53, and 83 to 86; these read YGSQ and DEFQ. Residue histidine 108 is part of the active site. Glycine 134 serves as a coordination point for NADP(+). The region spanning 183 to 328 is the KARI C-terminal knotted domain; that stretch reads NFKEETETDL…KGLRAMFSWL (146 aa). Mg(2+)-binding residues include aspartate 191, glutamate 195, glutamate 227, and glutamate 231. Residue serine 252 participates in substrate binding.

This sequence belongs to the ketol-acid reductoisomerase family. Requires Mg(2+) as cofactor.

The catalysed reaction is (2R)-2,3-dihydroxy-3-methylbutanoate + NADP(+) = (2S)-2-acetolactate + NADPH + H(+). It catalyses the reaction (2R,3R)-2,3-dihydroxy-3-methylpentanoate + NADP(+) = (S)-2-ethyl-2-hydroxy-3-oxobutanoate + NADPH + H(+). It participates in amino-acid biosynthesis; L-isoleucine biosynthesis; L-isoleucine from 2-oxobutanoate: step 2/4. It functions in the pathway amino-acid biosynthesis; L-valine biosynthesis; L-valine from pyruvate: step 2/4. Involved in the biosynthesis of branched-chain amino acids (BCAA). Catalyzes an alkyl-migration followed by a ketol-acid reduction of (S)-2-acetolactate (S2AL) to yield (R)-2,3-dihydroxy-isovalerate. In the isomerase reaction, S2AL is rearranged via a Mg-dependent methyl migration to produce 3-hydroxy-3-methyl-2-ketobutyrate (HMKB). In the reductase reaction, this 2-ketoacid undergoes a metal-dependent reduction by NADPH to yield (R)-2,3-dihydroxy-isovalerate. The chain is Ketol-acid reductoisomerase (NADP(+)) from Prochlorococcus marinus (strain MIT 9211).